A 616-amino-acid polypeptide reads, in one-letter code: Dihydroxy-acid dehydratase (616 aa).

Aspartate 81 lines the Mg(2+) pocket. Cysteine 122 is a binding site for [2Fe-2S] cluster. 2 residues coordinate Mg(2+): aspartate 123 and lysine 124. N6-carboxylysine is present on lysine 124. Position 195 (cysteine 195) interacts with [2Fe-2S] cluster. Glutamate 491 contacts Mg(2+). Catalysis depends on serine 517, which acts as the Proton acceptor.

It belongs to the IlvD/Edd family. Homodimer. It depends on [2Fe-2S] cluster as a cofactor. The cofactor is Mg(2+).

The enzyme catalyses (2R)-2,3-dihydroxy-3-methylbutanoate = 3-methyl-2-oxobutanoate + H2O. It carries out the reaction (2R,3R)-2,3-dihydroxy-3-methylpentanoate = (S)-3-methyl-2-oxopentanoate + H2O. It participates in amino-acid biosynthesis; L-isoleucine biosynthesis; L-isoleucine from 2-oxobutanoate: step 3/4. Its pathway is amino-acid biosynthesis; L-valine biosynthesis; L-valine from pyruvate: step 3/4. Functionally, functions in the biosynthesis of branched-chain amino acids. Catalyzes the dehydration of (2R,3R)-2,3-dihydroxy-3-methylpentanoate (2,3-dihydroxy-3-methylvalerate) into 2-oxo-3-methylpentanoate (2-oxo-3-methylvalerate) and of (2R)-2,3-dihydroxy-3-methylbutanoate (2,3-dihydroxyisovalerate) into 2-oxo-3-methylbutanoate (2-oxoisovalerate), the penultimate precursor to L-isoleucine and L-valine, respectively. The polypeptide is Dihydroxy-acid dehydratase (Blochmanniella pennsylvanica (strain BPEN)).